A 353-amino-acid polypeptide reads, in one-letter code: Interferon-stimulated 20 kDa exonuclease-like 2 (353 aa).

2 disordered regions span residues 1-93 and 125-172; these read MSTL…QPLD and ALPK…SGAS. Basic and acidic residues predominate over residues 14–23; that stretch reads PPKKALEGNA. A compositionally biased stretch (basic residues) spans 24-35; the sequence is KHRNFVKKRRLL. Residues 54-63 show a composition bias toward basic and acidic residues; sequence LHSEPSKKGE. The span at 135–151 shows a compositional bias: basic residues; it reads RSQKKSSQKKSSKKNHP. Over residues 152-172 the composition is skewed to polar residues; that stretch reads QKNAPQNSTQAHSENKCSGAS. Residues 178 to 353 form the Exonuclease domain; that stretch reads KMVAIDCEMV…EHLARNPPTD (176 aa).

The protein localises to the nucleus. It localises to the nucleolus. Its function is as follows. 3'-&gt; 5'-exoribonuclease involved in ribosome biogenesis in the processing of the 12S pre-rRNA. Displays a strong specificity for a 3'-end containing a free hydroxyl group. The polypeptide is Interferon-stimulated 20 kDa exonuclease-like 2 (ISG20L2) (Homo sapiens (Human)).